The following is a 1304-amino-acid chain: Splicing factor 3B subunit 1 (1304 aa).

Disordered stretches follow at residues 100–119 (QYDP…EDEY) and 124–148 (RTMI…PKMN). The span at 104-119 (FAEHRPPKIADREDEY) shows a compositional bias: basic and acidic residues. T125 is modified (phosphothreonine). At S129 the chain carries Phosphoserine. K141 bears the N6-acetyllysine mark. T142 carries the phosphothreonine modification. Residue R157 is modified to Citrulline. Residues 172 to 360 (LAEKAKAGEL…PVLTPGKTPI (189 aa)) form a disordered region. A Phosphoserine modification is found at S194. 3 positions are modified to phosphothreonine: T203, T207, and T211. K214 bears the N6-acetyllysine; alternate mark. K214 is covalently cross-linked (Glycyl lysine isopeptide (Lys-Gly) (interchain with G-Cter in SUMO2); alternate). A phosphothreonine mark is found at T223 and T227. The interaction with PPP1R8 stretch occupies residues 223–491 (TPGHTPSLRW…VDESTLSPEE (269 aa)). At S229 the chain carries Phosphoserine. Residues 231–241 (RWDETPGRAKG) show a composition bias toward basic and acidic residues. 8 positions are modified to phosphothreonine: T235, T244, T248, T257, T261, T267, T273, and T278. Residue S287 is modified to Phosphoserine. Residues 291–304 (NRWDETPKTERDTP) are compositionally biased toward basic and acidic residues. A phosphothreonine mark is found at T296, T299, T303, and T313. The residue at position 322 (S322) is a Phosphoserine. T326 and T328 each carry phosphothreonine. Residue S332 is modified to Phosphoserine. T341 carries the phosphothreonine modification. Positions 342 to 352 (PASQMGGSTPV) are enriched in polar residues. A phosphoserine mark is found at S344 and S349. Phosphothreonine occurs at positions 350 and 354. At S400 the chain carries Phosphoserine. K413 is covalently cross-linked (Glycyl lysine isopeptide (Lys-Gly) (interchain with G-Cter in SUMO2); alternate). K413 participates in a covalent cross-link: Glycyl lysine isopeptide (Lys-Gly) (interchain with G-Cter in SUMO1); alternate. T426 carries the phosphothreonine modification. Residue K430 forms a Glycyl lysine isopeptide (Lys-Gly) (interchain with G-Cter in SUMO2) linkage. The residue at position 434 (T434) is a Phosphothreonine; by DYRK1A. The residue at position 436 (T436) is a Phosphothreonine. S488 carries the phosphoserine modification. HEAT repeat units follow at residues 529-568 (GPLF…DLVR), 569-603 (PYVH…LAKA), 604-641 (AGLA…ALGI), 643-677 (SLLP…LMGC), 680-718 (LPHL…AATP), 763-801 (NYYT…TDGV), 843-881 (KVGA…NLGA), 1010-1048 (TPPI…RGAE), 1052-1090 (AREW…AIGP), 1122-1160 (TCSP…YIGE), and 1163-1201 (KDYI…GVYG). Positions 547–550 (QERH) are interaction with PHF5A. N6-acetyllysine is present on residues K554 and K562. The tract at residues 1156–1157 (EY) is interaction with PHF5A. Residues 1248 to 1304 (QYCLQGLFHPARKVRDVYWKIYNSIYIGSQDALIAHYPRIYNDDKNTYIRYDLDYIL) are interaction with SF3B3 and SF3B5.

The protein belongs to the SF3B1 family. As to quaternary structure, component of the 17S U2 SnRNP complex, a ribonucleoprotein complex that contains small nuclear RNA (snRNA) U2 and a number of specific proteins. Part of the SF3B subcomplex of the 17S U2 SnRNP complex. SF3B associates with the splicing subcomplex SF3A and a 12S RNA unit to form the U2 small nuclear ribonucleoproteins complex (U2 snRNP). Within the SF3B complex, interacts directly (via HEAT domain) with SF3B3, SF3B5, SF3B6 and (via HEAT domain) with PHF5A. The SF3B subcomplex interacts with U2AF2. Identified in the spliceosome C complex. Component of the minor (U12-type spliceosome) spliceosome. Within the minor spliceosome complex, interacts with SCNM1 and CRIPT. Component of the B-WICH complex, at least composed of SMARCA5/SNF2H, BAZ1B/WSTF, SF3B1, DEK, MYO1C, ERCC6, MYBBP1A and DDX21. Phosphorylated form interacts with PPP1R8. Interacts with PQBP1. Interacts with RBM17. Interacts with RBM39. Interacts with SETX. Interacts with RBM15. Interacts with USH1G. Interacts with SDE2. Interacts with U2AF1. Interacts with CACTIN. Interacts with ZRSR1. Interacts with CYREN. In terms of processing, phosphorylated. Phosphorylation occurs concomitantly with the splicing catalytic steps. Phosphorylation on Thr-244, Thr-248 and Thr-313 by cyclin-dependent kinases promotes interaction with PPP1R8 during mitosis. Post-translationally, citrullinated by PADI4. Ubiquitous.

The protein localises to the nucleus. Its subcellular location is the nucleus speckle. Functionally, component of the 17S U2 SnRNP complex of the spliceosome, a large ribonucleoprotein complex that removes introns from transcribed pre-mRNAs. The 17S U2 SnRNP complex (1) directly participates in early spliceosome assembly and (2) mediates recognition of the intron branch site during pre-mRNA splicing by promoting the selection of the pre-mRNA branch-site adenosine, the nucleophile for the first step of splicing. Within the 17S U2 SnRNP complex, SF3B1 is part of the SF3B subcomplex, which is required for 'A' complex assembly formed by the stable binding of U2 snRNP to the branchpoint sequence in pre-mRNA. Sequence independent binding of SF3A and SF3B subcomplexes upstream of the branch site is essential, it may anchor U2 snRNP to the pre-mRNA. May also be involved in the assembly of the 'E' complex. Also acts as a component of the minor spliceosome, which is involved in the splicing of U12-type introns in pre-mRNAs. Together with other U2 snRNP complex components may also play a role in the selective processing of microRNAs (miRNAs) from the long primary miRNA transcript, pri-miR-17-92. This Mus musculus (Mouse) protein is Splicing factor 3B subunit 1.